The primary structure comprises 612 residues: Probable translation initiation factor IF-2 (612 aa).

Residues Leu-11 to Leu-229 enclose the tr-type G domain. A G1 region spans residues Gly-20–Thr-27. Gly-20 to Thr-27 is a binding site for GTP. The G2 stretch occupies residues Leu-45 to His-49. The segment at Asp-84–Gly-87 is G3. GTP-binding positions include Asp-84 to His-88 and Asn-138 to Asp-141. Residues Asn-138–Asp-141 are G4. Residues Ser-207–Lys-209 form a G5 region.

This sequence belongs to the TRAFAC class translation factor GTPase superfamily. Classic translation factor GTPase family. IF-2 subfamily.

Its function is as follows. Function in general translation initiation by promoting the binding of the formylmethionine-tRNA to ribosomes. Seems to function along with eIF-2. This is Probable translation initiation factor IF-2 from Hyperthermus butylicus (strain DSM 5456 / JCM 9403 / PLM1-5).